Consider the following 597-residue polypeptide: Elongation factor 4 (597 aa).

Positions Asp2–Lys184 constitute a tr-type G domain. Residues Asp14–Thr19 and Asn131–Asp134 contribute to the GTP site.

The protein belongs to the TRAFAC class translation factor GTPase superfamily. Classic translation factor GTPase family. LepA subfamily.

It localises to the cell inner membrane. The enzyme catalyses GTP + H2O = GDP + phosphate + H(+). Required for accurate and efficient protein synthesis under certain stress conditions. May act as a fidelity factor of the translation reaction, by catalyzing a one-codon backward translocation of tRNAs on improperly translocated ribosomes. Back-translocation proceeds from a post-translocation (POST) complex to a pre-translocation (PRE) complex, thus giving elongation factor G a second chance to translocate the tRNAs correctly. Binds to ribosomes in a GTP-dependent manner. The sequence is that of Elongation factor 4 from Cupriavidus taiwanensis (strain DSM 17343 / BCRC 17206 / CCUG 44338 / CIP 107171 / LMG 19424 / R1) (Ralstonia taiwanensis (strain LMG 19424)).